Here is a 161-residue protein sequence, read N- to C-terminus: 2-C-methyl-D-erythritol 2,4-cyclodiphosphate synthase (161 aa).

A divalent metal cation is bound by residues Asp-11 and His-13. Residues 11-13 (DIH) and 37-38 (HS) contribute to the 4-CDP-2-C-methyl-D-erythritol 2-phosphate site. His-45 serves as a coordination point for a divalent metal cation. Residues 59–61 (DIG) and 135–138 (TTNE) contribute to the 4-CDP-2-C-methyl-D-erythritol 2-phosphate site.

The protein belongs to the IspF family. As to quaternary structure, homotrimer. Requires a divalent metal cation as cofactor.

The enzyme catalyses 4-CDP-2-C-methyl-D-erythritol 2-phosphate = 2-C-methyl-D-erythritol 2,4-cyclic diphosphate + CMP. The protein operates within isoprenoid biosynthesis; isopentenyl diphosphate biosynthesis via DXP pathway; isopentenyl diphosphate from 1-deoxy-D-xylulose 5-phosphate: step 4/6. Its function is as follows. Involved in the biosynthesis of isopentenyl diphosphate (IPP) and dimethylallyl diphosphate (DMAPP), two major building blocks of isoprenoid compounds. Catalyzes the conversion of 4-diphosphocytidyl-2-C-methyl-D-erythritol 2-phosphate (CDP-ME2P) to 2-C-methyl-D-erythritol 2,4-cyclodiphosphate (ME-CPP) with a corresponding release of cytidine 5-monophosphate (CMP). In Acaryochloris marina (strain MBIC 11017), this protein is 2-C-methyl-D-erythritol 2,4-cyclodiphosphate synthase.